Consider the following 301-residue polypeptide: NADH-cytochrome b5 reductase 3 (301 aa).

Gly-2 carries the N-myristoyl glycine lipid modification. An FAD-binding FR-type domain is found at 40–152 (DIKYPLRLID…RGPNGLLVYQ (113 aa)). Lys-42 is modified (N6-acetyllysine). Tyr-43 carries the post-translational modification Phosphotyrosine. Position 50 is an N6-acetyllysine (Lys-50). Residues Arg-92, Pro-93, Tyr-94, Val-109, Lys-111, and Phe-114 each contribute to the FAD site. Lys-120 is modified (N6-acetyllysine). 4 residues coordinate FAD: Lys-126, Met-127, Ser-128, and Thr-185.

The protein belongs to the flavoprotein pyridine nucleotide cytochrome reductase family. Component of a complex composed of cytochrome b5, NADH-cytochrome b5 reductase (CYB5R3) and MTARC2. Interacts with MTLN; the interaction is required to maintain cellular lipid composition and leads to stimulation of mitochondrial respiratory complex I activity. It depends on FAD as a cofactor.

The protein resides in the endoplasmic reticulum membrane. It localises to the mitochondrion outer membrane. The catalysed reaction is 2 Fe(III)-[cytochrome b5] + NADH = 2 Fe(II)-[cytochrome b5] + NAD(+) + H(+). Catalyzes the reduction of two molecules of cytochrome b5 using NADH as the electron donor. The protein is NADH-cytochrome b5 reductase 3 (CYB5R3) of Bos taurus (Bovine).